The chain runs to 592 residues: Anaphase-promoting complex subunit 8 (592 aa).

8 TPR repeats span residues 66–99 (EYYK…QLPI), 160–193 (QQQQ…NKKD), 291–324 (TYIL…EPNR), 359–392 (PETC…NDRY), 393–426 (LSAW…NPRD), 428–460 (RAWY…RPYD), 461–494 (PRMW…YDRE), and 496–528 (VAIN…CDQE). Positions 129–166 (QQQAQQQAQQAQQESQQNDKNNDTNNNNKTDQQQQQQQ) are disordered.

This sequence belongs to the APC8/CDC23 family. As to quaternary structure, the APC/C is composed of at least 13 subunits that stay tightly associated throughout the cell cycle: anapc1, anapc2, anapc3, anapc4, anapc5, anapc6, anapc7, anapc8, anapc10, anapc11, cdc20, cdc26 and cdh1.

It localises to the nucleus. It participates in protein modification; protein ubiquitination. Functionally, component of the anaphase promoting complex/cyclosome (APC/C), a cell cycle-regulated E3 ubiquitin-protein ligase complex that controls progression through mitosis and the G1 phase of the cell cycle. The polypeptide is Anaphase-promoting complex subunit 8 (anapc8) (Dictyostelium discoideum (Social amoeba)).